The sequence spans 405 residues: Tryptophan synthase beta chain (405 aa).

An N6-(pyridoxal phosphate)lysine modification is found at Lys98.

The protein belongs to the TrpB family. In terms of assembly, tetramer of two alpha and two beta chains. It depends on pyridoxal 5'-phosphate as a cofactor.

The catalysed reaction is (1S,2R)-1-C-(indol-3-yl)glycerol 3-phosphate + L-serine = D-glyceraldehyde 3-phosphate + L-tryptophan + H2O. It participates in amino-acid biosynthesis; L-tryptophan biosynthesis; L-tryptophan from chorismate: step 5/5. Functionally, the beta subunit is responsible for the synthesis of L-tryptophan from indole and L-serine. The sequence is that of Tryptophan synthase beta chain from Xylella fastidiosa (strain M23).